Consider the following 120-residue polypeptide: uncharacterized protein (120 aa).

This sequence to M.tuberculosis Rv0026 and Rv0739.

This is an uncharacterized protein from Mycobacterium tuberculosis (strain CDC 1551 / Oshkosh).